A 192-amino-acid polypeptide reads, in one-letter code: uncharacterized protein (192 aa).

The region spanning 29 to 160 (HRQAAVLIPI…PLDIYRRGDS (132 aa)) is the Nudix hydrolase domain. The Nudix box motif lies at 67-89 (GAVDDTDASAIAAALREAEEEVA). Residues E83 and E87 each coordinate Mg(2+).

The protein belongs to the Nudix hydrolase family. PCD1 subfamily. Requires Mn(2+) as cofactor. The cofactor is Mg(2+).

Probably mediates the hydrolysis of some nucleoside diphosphate derivatives. This is an uncharacterized protein from Escherichia coli (strain K12).